Reading from the N-terminus, the 616-residue chain is Dihydroxy-acid dehydratase (616 aa).

Asp81 serves as a coordination point for Mg(2+). Residue Cys122 participates in [2Fe-2S] cluster binding. Mg(2+)-binding residues include Asp123 and Lys124. An N6-carboxylysine modification is found at Lys124. Cys195 provides a ligand contact to [2Fe-2S] cluster. Residue Glu491 coordinates Mg(2+). Ser517 serves as the catalytic Proton acceptor.

It belongs to the IlvD/Edd family. In terms of assembly, homodimer. It depends on [2Fe-2S] cluster as a cofactor. Mg(2+) is required as a cofactor.

The catalysed reaction is (2R)-2,3-dihydroxy-3-methylbutanoate = 3-methyl-2-oxobutanoate + H2O. The enzyme catalyses (2R,3R)-2,3-dihydroxy-3-methylpentanoate = (S)-3-methyl-2-oxopentanoate + H2O. It functions in the pathway amino-acid biosynthesis; L-isoleucine biosynthesis; L-isoleucine from 2-oxobutanoate: step 3/4. Its pathway is amino-acid biosynthesis; L-valine biosynthesis; L-valine from pyruvate: step 3/4. In terms of biological role, functions in the biosynthesis of branched-chain amino acids. Catalyzes the dehydration of (2R,3R)-2,3-dihydroxy-3-methylpentanoate (2,3-dihydroxy-3-methylvalerate) into 2-oxo-3-methylpentanoate (2-oxo-3-methylvalerate) and of (2R)-2,3-dihydroxy-3-methylbutanoate (2,3-dihydroxyisovalerate) into 2-oxo-3-methylbutanoate (2-oxoisovalerate), the penultimate precursor to L-isoleucine and L-valine, respectively. The polypeptide is Dihydroxy-acid dehydratase (Salmonella agona (strain SL483)).